The sequence spans 126 residues: Fluoride-specific ion channel FluC (126 aa).

The next 4 membrane-spanning stretches (helical) occupy residues 4–24, 33–53, 67–87, and 97–117; these read PLLS…FLGL, IPLG…FAMA, FVIT…IEIV, and MAML…CLGL. 2 residues coordinate Na(+): Gly74 and Thr77.

It belongs to the fluoride channel Fluc/FEX (TC 1.A.43) family.

The protein resides in the cell inner membrane. The catalysed reaction is fluoride(in) = fluoride(out). With respect to regulation, na(+) is not transported, but it plays an essential structural role and its presence is essential for fluoride channel function. Fluoride-specific ion channel. Important for reducing fluoride concentration in the cell, thus reducing its toxicity. This is Fluoride-specific ion channel FluC from Acinetobacter baumannii (strain SDF).